Here is an 878-residue protein sequence, read N- to C-terminus: Outer membrane usher protein FimD (878 aa).

Residues 1 to 45 form the signal peptide; that stretch reads MSYLNLRLYQRNTQCLHIRKHRLAGFFVRLVVACAFAAQAPLSSA. Cys-855 and Cys-877 form a disulfide bridge.

This sequence belongs to the fimbrial export usher family.

It localises to the cell outer membrane. Its function is as follows. Involved in the export and assembly of FimA fimbrial subunits across the outer membrane. This chain is Outer membrane usher protein FimD (fimD), found in Escherichia coli (strain K12).